Consider the following 437-residue polypeptide: Serine--tRNA ligase (437 aa).

227–229 (TAE) provides a ligand contact to L-serine. ATP is bound by residues 258–260 (RSE) and V274. An L-serine-binding site is contributed by E281. Residue 347–350 (ETHS) coordinates ATP. T382 serves as a coordination point for L-serine.

Belongs to the class-II aminoacyl-tRNA synthetase family. Type-1 seryl-tRNA synthetase subfamily. Homodimer. The tRNA molecule binds across the dimer.

It is found in the cytoplasm. It catalyses the reaction tRNA(Ser) + L-serine + ATP = L-seryl-tRNA(Ser) + AMP + diphosphate + H(+). The catalysed reaction is tRNA(Sec) + L-serine + ATP = L-seryl-tRNA(Sec) + AMP + diphosphate + H(+). The protein operates within aminoacyl-tRNA biosynthesis; selenocysteinyl-tRNA(Sec) biosynthesis; L-seryl-tRNA(Sec) from L-serine and tRNA(Sec): step 1/1. Its function is as follows. Catalyzes the attachment of serine to tRNA(Ser). Is also able to aminoacylate tRNA(Sec) with serine, to form the misacylated tRNA L-seryl-tRNA(Sec), which will be further converted into selenocysteinyl-tRNA(Sec). The chain is Serine--tRNA ligase from Deinococcus geothermalis (strain DSM 11300 / CIP 105573 / AG-3a).